Here is a 261-residue protein sequence, read N- to C-terminus: Cytochrome c oxidase subunit 3 (261 aa).

At 1–15 the chain is on the mitochondrial matrix side; the sequence is MTHQTHAYHMVNPSP. Residues 16 to 34 form a helical membrane-spanning segment; that stretch reads WPLTGALSALLMTSGLIMW. At 35-40 the chain is on the mitochondrial intermembrane side; that stretch reads FHYNSM. The chain crosses the membrane as a helical span at residues 41-66; the sequence is ALLTLGFTTNLLTMYQWWRDVIREGT. The Mitochondrial matrix portion of the chain corresponds to 67-72; that stretch reads FQGHHT. A helical membrane pass occupies residues 73 to 105; that stretch reads PIVQKGLRYGMVLFIVSEVFFFAGFFWAFYHSS. Topologically, residues 106-128 are mitochondrial intermembrane; the sequence is LAPTPELGGCWPPTGIIPLNPLE. The helical transmembrane segment at 129–152 threads the bilayer; sequence VPLLNTSVLLASGVSITWAHHSLM. The Mitochondrial matrix portion of the chain corresponds to 153-155; sequence EGN. Residues 156 to 183 form a helical membrane-spanning segment; the sequence is RKHMLQALFITISLGVYFTLLQASEYYE. At 184–190 the chain is on the mitochondrial intermembrane side; sequence TSFTISD. The chain crosses the membrane as a helical span at residues 191 to 223; it reads GVYGSTFFMATGFHGLHVIIGSTFLIVCFLRQL. Over 224–232 the chain is Mitochondrial matrix; that stretch reads YYHFTSNHH. A helical membrane pass occupies residues 233–256; it reads FGFEAAAWYWHFVDVVWLFLYVSI. At 257–261 the chain is on the mitochondrial intermembrane side; it reads YWWGS.

The protein belongs to the cytochrome c oxidase subunit 3 family. Component of the cytochrome c oxidase (complex IV, CIV), a multisubunit enzyme composed of 14 subunits. The complex is composed of a catalytic core of 3 subunits MT-CO1, MT-CO2 and MT-CO3, encoded in the mitochondrial DNA, and 11 supernumerary subunits COX4I, COX5A, COX5B, COX6A, COX6B, COX6C, COX7A, COX7B, COX7C, COX8 and NDUFA4, which are encoded in the nuclear genome. The complex exists as a monomer or a dimer and forms supercomplexes (SCs) in the inner mitochondrial membrane with NADH-ubiquinone oxidoreductase (complex I, CI) and ubiquinol-cytochrome c oxidoreductase (cytochrome b-c1 complex, complex III, CIII), resulting in different assemblies (supercomplex SCI(1)III(2)IV(1) and megacomplex MCI(2)III(2)IV(2)).

Its subcellular location is the mitochondrion inner membrane. It catalyses the reaction 4 Fe(II)-[cytochrome c] + O2 + 8 H(+)(in) = 4 Fe(III)-[cytochrome c] + 2 H2O + 4 H(+)(out). In terms of biological role, component of the cytochrome c oxidase, the last enzyme in the mitochondrial electron transport chain which drives oxidative phosphorylation. The respiratory chain contains 3 multisubunit complexes succinate dehydrogenase (complex II, CII), ubiquinol-cytochrome c oxidoreductase (cytochrome b-c1 complex, complex III, CIII) and cytochrome c oxidase (complex IV, CIV), that cooperate to transfer electrons derived from NADH and succinate to molecular oxygen, creating an electrochemical gradient over the inner membrane that drives transmembrane transport and the ATP synthase. Cytochrome c oxidase is the component of the respiratory chain that catalyzes the reduction of oxygen to water. Electrons originating from reduced cytochrome c in the intermembrane space (IMS) are transferred via the dinuclear copper A center (CU(A)) of subunit 2 and heme A of subunit 1 to the active site in subunit 1, a binuclear center (BNC) formed by heme A3 and copper B (CU(B)). The BNC reduces molecular oxygen to 2 water molecules using 4 electrons from cytochrome c in the IMS and 4 protons from the mitochondrial matrix. This is Cytochrome c oxidase subunit 3 (MT-CO3) from Canis lupus familiaris (Dog).